The primary structure comprises 101 residues: Small ribosomal subunit protein uS14 (101 aa).

The protein belongs to the universal ribosomal protein uS14 family. Part of the 30S ribosomal subunit. Contacts proteins S3 and S10.

Binds 16S rRNA, required for the assembly of 30S particles and may also be responsible for determining the conformation of the 16S rRNA at the A site. The polypeptide is Small ribosomal subunit protein uS14 (Hydrogenovibrio crunogenus (strain DSM 25203 / XCL-2) (Thiomicrospira crunogena)).